The following is a 534-amino-acid chain: DNA-directed RNA polymerase III subunit RPC3 (534 aa).

Residues 161–181 are disordered; sequence PSVPTTENSDPGPPPPAPTLV. Position 194 is a phosphoserine (Ser-194). Positions 197 to 228 are disordered; the sequence is GKGKRRRSSDEDAAGEPKAKRPKYTTDNKEPI. Residues 211 to 228 are compositionally biased toward basic and acidic residues; it reads GEPKAKRPKYTTDNKEPI.

This sequence belongs to the eukaryotic RPC3/POLR3C RNA polymerase subunit family. In terms of assembly, component of the RNA polymerase III complex consisting of 17 subunits: a ten-subunit horseshoe-shaped catalytic core composed of POLR3A/RPC1, POLR3B/RPC2, POLR1C/RPAC1, POLR1D/RPAC2, POLR3K/RPC10, POLR2E/RPABC1, POLR2F/RPABC2, POLR2H/RPABC3, POLR2K/RPABC4 and POLR2L/RPABC5; a mobile stalk composed of two subunits POLR3H/RPC8 and CRCP/RPC9, protruding from the core and functioning primarily in transcription initiation; and additional subunits homologous to general transcription factors of the RNA polymerase II machinery, POLR3C/RPC3-POLR3F/RPC6-POLR3G/RPC7 heterotrimer required for transcription initiation and POLR3D/RPC4-POLR3E/RPC5 heterodimer involved in both transcription initiation and termination. Directly interacts with POLR3G/RPC7 and POLR3GL. Directly interacts with POLR3F/RPC6. Interacts with GTF3C4. As part of the RNA polymerase III complex, interacts with PKP2.

It is found in the nucleus. Its function is as follows. DNA-dependent RNA polymerase catalyzes the transcription of DNA into RNA using the four ribonucleoside triphosphates as substrates. Specific peripheric component of RNA polymerase III (Pol III) which synthesizes small non-coding RNAs including 5S rRNA, snRNAs, tRNAs and miRNAs from at least 500 distinct genomic loci. Part of POLR3C/RPC3-POLR3F/RPC6-POLR3G/RPC7 heterotrimer, coordinates the dynamics of Pol III stalk and clamp modules during the transition from apo to elongation state. Pol III plays a key role in sensing and limiting infection by intracellular bacteria and DNA viruses. Acts as a nuclear and cytosolic DNA sensor involved in innate immune response. Can sense non-self dsDNA that serves as template for transcription into dsRNA. The non-self RNA polymerase III transcripts, such as Epstein-Barr virus-encoded RNAs (EBERs) induce type I interferon and NF-kappa-B through the RIG-I pathway. Preferentially binds single-stranded DNA (ssDNA) in a sequence-independent manner. The protein is DNA-directed RNA polymerase III subunit RPC3 of Homo sapiens (Human).